Reading from the N-terminus, the 985-residue chain is Thioredoxin domain-containing protein 11 (985 aa).

Residues 1–11 (MSECGGRGGGS) are compositionally biased toward gly residues. Positions 1 to 38 (MSECGGRGGGSSSSEDAEDEGGGGGGPAGSDCLSSSPT) are disordered. Over residues 29 to 38 (GSDCLSSSPT) the composition is skewed to low complexity. The helical transmembrane segment at 65-85 (LLCGAVALGCALLLALKFTCS) threads the bilayer. One can recognise a Thioredoxin 1 domain in the interval 92–214 (IPAKPPVSFF…IEKFVRRVMK (123 aa)). Disulfide bonds link C469/C472 and C719/C722. A Thioredoxin 2 domain is found at 649-799 (LDPKQALMKL…LLRFILHHSD (151 aa)). Residues 821 to 919 (VLQRGHISHL…ASENLLTENT (99 aa)) adopt a coiled-coil conformation. S828 bears the Phosphoserine mark. Residues 935 to 985 (RDGAESLAAQREVHPKQPEPSATPQLPGSSPPPANVSATLVSERNKENRTD) form a disordered region.

The protein belongs to the protein disulfide isomerase family. As to quaternary structure, interacts with the cytoplasmic part of DUOX1 and DUOX2. Interacts with TPO and CYBA. As to expression, widely expressed at low level. Expressed at higher level in thyroid and prostate.

Its subcellular location is the endoplasmic reticulum membrane. Functionally, may act as a redox regulator involved in DUOX proteins folding. The interaction with DUOX1 and DUOX2 suggest that it belongs to a multiprotein complex constituting the thyroid H(2)O(2) generating system. It is however not sufficient to assist DUOX1 and DUOX2 in H(2)O(2) generation. The sequence is that of Thioredoxin domain-containing protein 11 (TXNDC11) from Homo sapiens (Human).